The sequence spans 481 residues: ATP synthase subunit alpha (481 aa).

145-152 (GDRQTGKT) contributes to the ATP binding site.

Belongs to the ATPase alpha/beta chains family. F-type ATPases have 2 components, CF(1) - the catalytic core - and CF(0) - the membrane proton channel. CF(1) has five subunits: alpha(3), beta(3), gamma(1), delta(1), epsilon(1). CF(0) has three main subunits: a(1), b(2) and c(9-12). The alpha and beta chains form an alternating ring which encloses part of the gamma chain. CF(1) is attached to CF(0) by a central stalk formed by the gamma and epsilon chains, while a peripheral stalk is formed by the delta and b chains.

The protein resides in the cell membrane. It catalyses the reaction ATP + H2O + 4 H(+)(in) = ADP + phosphate + 5 H(+)(out). In terms of biological role, produces ATP from ADP in the presence of a proton gradient across the membrane. The alpha chain is a regulatory subunit. In Carsonella ruddii (strain PV), this protein is ATP synthase subunit alpha.